A 339-amino-acid chain; its full sequence is GTPase Obg (339 aa).

One can recognise an Obg domain in the interval 1 to 159 (MKFLDQAKVY…RALWLRLKLI (159 aa)). The region spanning 160 to 327 (ADGGIIGLPN…VLRSVAHVIE (168 aa)) is the OBG-type G domain. Residues 166 to 173 (GLPNAGKS), 191 to 195 (FTTLY), 212 to 215 (DIPG), 279 to 282 (SQVD), and 308 to 310 (SAV) each bind GTP. Positions 173 and 193 each coordinate Mg(2+).

This sequence belongs to the TRAFAC class OBG-HflX-like GTPase superfamily. OBG GTPase family. In terms of assembly, monomer. It depends on Mg(2+) as a cofactor.

It is found in the cytoplasm. An essential GTPase which binds GTP, GDP and possibly (p)ppGpp with moderate affinity, with high nucleotide exchange rates and a fairly low GTP hydrolysis rate. Plays a role in control of the cell cycle, stress response, ribosome biogenesis and in those bacteria that undergo differentiation, in morphogenesis control. In Bartonella bacilliformis (strain ATCC 35685 / KC583 / Herrer 020/F12,63), this protein is GTPase Obg.